Reading from the N-terminus, the 118-residue chain is Aspartate 1-decarboxylase (118 aa).

Serine 25 serves as the catalytic Schiff-base intermediate with substrate; via pyruvic acid. Serine 25 carries the pyruvic acid (Ser) modification. Threonine 57 is a binding site for substrate. The active-site Proton donor is the tyrosine 58. 73–75 is a substrate binding site; the sequence is GAA.

It belongs to the PanD family. As to quaternary structure, heterooctamer of four alpha and four beta subunits. Pyruvate serves as cofactor. Post-translationally, is synthesized initially as an inactive proenzyme, which is activated by self-cleavage at a specific serine bond to produce a beta-subunit with a hydroxyl group at its C-terminus and an alpha-subunit with a pyruvoyl group at its N-terminus.

It localises to the cytoplasm. It catalyses the reaction L-aspartate + H(+) = beta-alanine + CO2. Its pathway is cofactor biosynthesis; (R)-pantothenate biosynthesis; beta-alanine from L-aspartate: step 1/1. In terms of biological role, catalyzes the pyruvoyl-dependent decarboxylation of aspartate to produce beta-alanine. The protein is Aspartate 1-decarboxylase of Hyphomonas neptunium (strain ATCC 15444).